The primary structure comprises 741 residues: Catalase-peroxidase (741 aa).

The signal sequence occupies residues 1 to 21 (MRNFRRFTIALLVLFLGPIGA). Residues 109–231 (WHSAGTYRIS…LAAVQMGLIY (123 aa)) constitute a cross-link (tryptophyl-tyrosyl-methioninium (Trp-Tyr) (with M-257)). His-110 acts as the Proton acceptor in catalysis. A cross-link (tryptophyl-tyrosyl-methioninium (Tyr-Met) (with W-109)) is located at residues 231–257 (YVNPEGPNGNPDPLAAAKDIRETFGRM). His-272 contacts heme b.

The protein belongs to the peroxidase family. Peroxidase/catalase subfamily. In terms of assembly, homodimer or homotetramer. Heme b is required as a cofactor. Post-translationally, formation of the three residue Trp-Tyr-Met cross-link is important for the catalase, but not the peroxidase activity of the enzyme.

The catalysed reaction is H2O2 + AH2 = A + 2 H2O. It catalyses the reaction 2 H2O2 = O2 + 2 H2O. In terms of biological role, bifunctional enzyme with both catalase and broad-spectrum peroxidase activity. This is Catalase-peroxidase from Leptospira biflexa serovar Patoc (strain Patoc 1 / Ames).